The following is a 206-amino-acid chain: Dephospho-CoA kinase (206 aa).

The region spanning 4–204 (IVGLTGGIGS…QFYLQQAENK (201 aa)) is the DPCK domain. 12 to 17 (GSGKTT) contacts ATP.

Belongs to the CoaE family.

It is found in the cytoplasm. It carries out the reaction 3'-dephospho-CoA + ATP = ADP + CoA + H(+). It participates in cofactor biosynthesis; coenzyme A biosynthesis; CoA from (R)-pantothenate: step 5/5. Functionally, catalyzes the phosphorylation of the 3'-hydroxyl group of dephosphocoenzyme A to form coenzyme A. This is Dephospho-CoA kinase from Haemophilus influenzae (strain ATCC 51907 / DSM 11121 / KW20 / Rd).